Consider the following 317-residue polypeptide: Beta-ketoacyl-[acyl-carrier-protein] synthase III (317 aa).

Catalysis depends on residues C112 and H244. Positions 245–249 (QANIR) are ACP-binding. The active site involves N274.

The protein belongs to the thiolase-like superfamily. FabH family. Homodimer.

The protein localises to the cytoplasm. It carries out the reaction malonyl-[ACP] + acetyl-CoA + H(+) = 3-oxobutanoyl-[ACP] + CO2 + CoA. It participates in lipid metabolism; fatty acid biosynthesis. Catalyzes the condensation reaction of fatty acid synthesis by the addition to an acyl acceptor of two carbons from malonyl-ACP. Catalyzes the first condensation reaction which initiates fatty acid synthesis and may therefore play a role in governing the total rate of fatty acid production. Possesses both acetoacetyl-ACP synthase and acetyl transacylase activities. Its substrate specificity determines the biosynthesis of branched-chain and/or straight-chain of fatty acids. In Rickettsia typhi (strain ATCC VR-144 / Wilmington), this protein is Beta-ketoacyl-[acyl-carrier-protein] synthase III.